A 377-amino-acid chain; its full sequence is MQQRVIVGMSGGVDSSVSAALLLQQGYQVEGLFMKNWEEDDGTEYCTAMEDLADAQAVADKIGIKLHTANFAMEYWDRVFEHFLAEYAAGRTPNPDILCNKEIKFRAFLDHAMTLGADFIATGHYARRAETAYNSKGEAYAPLLRGLDNNKDQTYFLHAVHGREINKTLFPVGEIEKPEVRRIAEELDLATAKKKDSTGICFIGERRFNDFLKQYLPAQPGKIVLDNGKEVGEHHGLMYYTLGQRGGIGLGGMKGASEGAWFVLHKDVTNNRLVVGQGHDHPLMQSTQLWSESIDWVAGEQNIPAEGLRCTAKTRYRQPDQACTVFIDENSEHGVRVEFDEPQRAVTPGQSVVFYSDEVCLGGGVIHHTNAPTPNFI.

Residues 8–15 (GMSGGVDS) and Met34 contribute to the ATP site. Positions 94–96 (NPD) are interaction with target base in tRNA. The active-site Nucleophile is the Cys99. A disulfide bridge links Cys99 with Cys201. ATP is bound at residue Gly123. The interaction with tRNA stretch occupies residues 151-153 (KDQ). The Cysteine persulfide intermediate role is filled by Cys201. The interaction with tRNA stretch occupies residues 315–316 (RY).

The protein belongs to the MnmA/TRMU family.

Its subcellular location is the cytoplasm. It catalyses the reaction S-sulfanyl-L-cysteinyl-[protein] + uridine(34) in tRNA + AH2 + ATP = 2-thiouridine(34) in tRNA + L-cysteinyl-[protein] + A + AMP + diphosphate + H(+). Its function is as follows. Catalyzes the 2-thiolation of uridine at the wobble position (U34) of tRNA, leading to the formation of s(2)U34. The polypeptide is tRNA-specific 2-thiouridylase MnmA (Acinetobacter baumannii (strain SDF)).